The chain runs to 117 residues: Large ribosomal subunit protein uL22c (117 aa).

This sequence belongs to the universal ribosomal protein uL22 family. Part of the 50S ribosomal subunit.

The protein resides in the plastid. Its subcellular location is the chloroplast. In terms of biological role, this protein binds specifically to 23S rRNA. The globular domain of the protein is located near the polypeptide exit tunnel on the outside of the subunit, while an extended beta-hairpin is found that lines the wall of the exit tunnel in the center of the 70S ribosome. In Pyropia yezoensis (Susabi-nori), this protein is Large ribosomal subunit protein uL22c (rpl22).